The primary structure comprises 235 residues: Large ribosomal subunit protein uL1 (235 aa).

Belongs to the universal ribosomal protein uL1 family. As to quaternary structure, part of the 50S ribosomal subunit.

Its function is as follows. Binds directly to 23S rRNA. The L1 stalk is quite mobile in the ribosome, and is involved in E site tRNA release. Functionally, protein L1 is also a translational repressor protein, it controls the translation of the L11 operon by binding to its mRNA. This is Large ribosomal subunit protein uL1 from Nitratidesulfovibrio vulgaris (strain DSM 19637 / Miyazaki F) (Desulfovibrio vulgaris).